The sequence spans 221 residues: Protein-L-isoaspartate O-methyltransferase (221 aa).

Residue Ser-60 is part of the active site.

This sequence belongs to the methyltransferase superfamily. L-isoaspartyl/D-aspartyl protein methyltransferase family.

It localises to the cytoplasm. The enzyme catalyses [protein]-L-isoaspartate + S-adenosyl-L-methionine = [protein]-L-isoaspartate alpha-methyl ester + S-adenosyl-L-homocysteine. Functionally, catalyzes the methyl esterification of L-isoaspartyl residues in peptides and proteins that result from spontaneous decomposition of normal L-aspartyl and L-asparaginyl residues. It plays a role in the repair and/or degradation of damaged proteins. This Rhodospirillum centenum (strain ATCC 51521 / SW) protein is Protein-L-isoaspartate O-methyltransferase.